The sequence spans 266 residues: Putative [LysW]-aminoadipate/[LysW]-glutamate kinase (266 aa).

Residues 36–37, Arg-63, and Asn-168 contribute to the substrate site; that span reads GG.

The protein belongs to the acetylglutamate kinase family. LysZ subfamily.

The protein resides in the cytoplasm. The enzyme catalyses [amino-group carrier protein]-C-terminal-N-(1,4-dicarboxybutan-1-yl)-L-glutamine + ATP = [amino-group carrier protein]-C-terminal-N-(1-carboxy-5-phosphooxy-5-oxopentan-1-yl)-L-glutamine + ADP. It catalyses the reaction [amino-group carrier protein]-C-terminal-gamma-(L-glutamyl)-L-glutamate + ATP = [amino-group carrier protein]-C-terminal-gamma-(5-phospho-L-glutamyl)-L-glutamate + ADP. It functions in the pathway amino-acid biosynthesis; L-lysine biosynthesis via AAA pathway; L-lysine from L-alpha-aminoadipate (Thermus route): step 2/5. The protein operates within amino-acid biosynthesis; L-arginine biosynthesis. In terms of biological role, involved in both the arginine and lysine biosynthetic pathways. Phosphorylates the LysW-bound precursors glutamate (for arginine biosynthesis), respectively alpha-aminoadipate (for lysine biosynthesis). This is Putative [LysW]-aminoadipate/[LysW]-glutamate kinase from Cenarchaeum symbiosum (strain A).